Consider the following 366-residue polypeptide: sn-glycerol-3-phosphate import ATP-binding protein UgpC (366 aa).

The ABC transporter domain maps to 4 to 235 (VTLRNVRKTY…PASTFVASFI (232 aa)). 37 to 44 (GPSGCGKS) contacts ATP.

Belongs to the ABC transporter superfamily. sn-glycerol-3-phosphate importer (TC 3.A.1.1.3) family. As to quaternary structure, the complex is composed of two ATP-binding proteins (UgpC), two transmembrane proteins (UgpA and UgpE) and a solute-binding protein (UgpB).

Its subcellular location is the cell inner membrane. It carries out the reaction sn-glycerol 3-phosphate(out) + ATP + H2O = sn-glycerol 3-phosphate(in) + ADP + phosphate + H(+). Part of the ABC transporter complex UgpBAEC involved in sn-glycerol-3-phosphate (G3P) import. Responsible for energy coupling to the transport system. This Rhodopseudomonas palustris (strain BisB18) protein is sn-glycerol-3-phosphate import ATP-binding protein UgpC.